A 280-amino-acid polypeptide reads, in one-letter code: Purine nucleoside phosphorylase (280 aa).

Phosphate is bound by residues Ser15 and 55–56; that span reads RH. Met194 is a binding site for substrate. Thr195 provides a ligand contact to phosphate. Residue 218 to 220 participates in substrate binding; it reads DLD.

Belongs to the PNP/MTAP phosphorylase family. MTAP subfamily. Homohexamer. Dimer of a homotrimer.

The enzyme catalyses a purine D-ribonucleoside + phosphate = a purine nucleobase + alpha-D-ribose 1-phosphate. Its pathway is purine metabolism; purine nucleoside salvage. Functionally, purine nucleoside phosphorylase involved in purine salvage. The polypeptide is Purine nucleoside phosphorylase (Streptomyces coelicolor (strain ATCC BAA-471 / A3(2) / M145)).